The chain runs to 184 residues: MSVMPDTWIREMAKTKGMIEPFTEKQQRAGVISYGVSSYGYDARVSREFKIFTNVDSAVVDPKSFSPNSLVDRETDICVIPPNSFALARTVEYFRIPRDVLVICLGKSTYARCGIIVNVTPLEPEWEGHVTLEFSNTTPLPAKIYAGEGACQFIFLKGDTVCETSYADRSGKYQGQQGVTLPRL.

Residues 107 to 112, 131 to 133, Q152, Y166, and Q176 each bind dCTP; these read KSTYAR and TLE. The Proton donor/acceptor role is filled by E133.

The protein belongs to the dCTP deaminase family. In terms of assembly, homotrimer.

It carries out the reaction dCTP + H2O + H(+) = dUTP + NH4(+). The protein operates within pyrimidine metabolism; dUMP biosynthesis; dUMP from dCTP (dUTP route): step 1/2. In terms of biological role, catalyzes the deamination of dCTP to dUTP. This Paramagnetospirillum magneticum (strain ATCC 700264 / AMB-1) (Magnetospirillum magneticum) protein is dCTP deaminase.